We begin with the raw amino-acid sequence, 473 residues long: Cysteine--tRNA ligase (473 aa).

Cysteine 28 serves as a coordination point for Zn(2+). A 'HIGH' region motif is present at residues 30-40 (PTVYNMPHIGN). 3 residues coordinate Zn(2+): cysteine 213, histidine 238, and glutamate 242. Positions 270-274 (KMSKS) match the 'KMSKS' region motif. Lysine 273 contributes to the ATP binding site.

This sequence belongs to the class-I aminoacyl-tRNA synthetase family. Requires Zn(2+) as cofactor.

It is found in the cytoplasm. The catalysed reaction is tRNA(Cys) + L-cysteine + ATP = L-cysteinyl-tRNA(Cys) + AMP + diphosphate. This chain is Cysteine--tRNA ligase, found in Methanosarcina acetivorans (strain ATCC 35395 / DSM 2834 / JCM 12185 / C2A).